The following is a 169-amino-acid chain: Probable phospholipid hydroperoxide glutathione peroxidase (169 aa).

C43 is an active-site residue.

The protein belongs to the glutathione peroxidase family. In terms of tissue distribution, germinating seed, apex, flower, as well as in stressed tissues.

It is found in the cytoplasm. The catalysed reaction is a hydroperoxy polyunsaturated fatty acid + 2 glutathione = a hydroxy polyunsaturated fatty acid + glutathione disulfide + H2O. Protects cells and enzymes from oxidative damage, by catalyzing the reduction of hydrogen peroxide, lipid peroxides and organic hydroperoxide, by glutathione. This chain is Probable phospholipid hydroperoxide glutathione peroxidase, found in Nicotiana sylvestris (Wood tobacco).